The sequence spans 284 residues: Ribosomal RNA small subunit methyltransferase A (284 aa).

Residues asparagine 27, leucine 29, glycine 54, glutamate 75, aspartate 100, and asparagine 125 each contribute to the S-adenosyl-L-methionine site.

It belongs to the class I-like SAM-binding methyltransferase superfamily. rRNA adenine N(6)-methyltransferase family. RsmA subfamily.

The protein resides in the cytoplasm. It carries out the reaction adenosine(1518)/adenosine(1519) in 16S rRNA + 4 S-adenosyl-L-methionine = N(6)-dimethyladenosine(1518)/N(6)-dimethyladenosine(1519) in 16S rRNA + 4 S-adenosyl-L-homocysteine + 4 H(+). Its function is as follows. Specifically dimethylates two adjacent adenosines (A1518 and A1519) in the loop of a conserved hairpin near the 3'-end of 16S rRNA in the 30S particle. May play a critical role in biogenesis of 30S subunits. This Protochlamydia amoebophila (strain UWE25) protein is Ribosomal RNA small subunit methyltransferase A.